A 95-amino-acid chain; its full sequence is DDRRSPLEECFQQNDYEEFLEIARNSQLYQESLREDSSYHLSFIESLKSDALFSYEKKFWEADGIHGGKVINDLSLIHDLPKREIQALCYPSIKK.

The protein belongs to the flavin monoamine oxidase family. FIG1 subfamily. As to quaternary structure, homodimer; non-covalently linked. Requires FAD as cofactor. Post-translationally, N-glycosylated. As to expression, expressed by the venom gland.

Its subcellular location is the secreted. The enzyme catalyses an L-alpha-amino acid + O2 + H2O = a 2-oxocarboxylate + H2O2 + NH4(+). It carries out the reaction L-leucine + O2 + H2O = 4-methyl-2-oxopentanoate + H2O2 + NH4(+). The catalysed reaction is L-phenylalanine + O2 + H2O = 3-phenylpyruvate + H2O2 + NH4(+). It catalyses the reaction L-tryptophan + O2 + H2O = indole-3-pyruvate + H2O2 + NH4(+). The enzyme catalyses L-methionine + O2 + H2O = 4-methylsulfanyl-2-oxobutanoate + H2O2 + NH4(+). It carries out the reaction L-arginine + O2 + H2O = 5-guanidino-2-oxopentanoate + H2O2 + NH4(+). Catalyzes an oxidative deamination of predominantly hydrophobic and aromatic L-amino acids, thus producing hydrogen peroxide that may contribute to the diverse toxic effects of this enzyme. Is highly active on L-Met, L-Leu, L-Phe, L-Trp, and L-Arg, and no weakly or no active on L-His, L-Tyr, L-Ile, L-Gln, and L-Lys. Exhibits diverse biological activities, such as antibacterial activity against both Gram-positive (B.subtilis) and Gram-negative (E.coli) bacteria, and inhibition of ADP- or collagen-induced platelet aggregation. Effects of snake L-amino oxidases on platelets are controversial, since they either induce aggregation or inhibit agonist-induced aggregation. These different effects are probably due to different experimental conditions. This protein may also induce hemorrhage, hemolysis, edema, apoptosis, and have antiparasitic activities. In Naja oxiana (Central Asian cobra), this protein is L-amino-acid oxidase.